Consider the following 361-residue polypeptide: Probable dual-specificity RNA methyltransferase RlmN (361 aa).

Residue Glu-91 is the Proton acceptor of the active site. The 233-residue stretch at 97 to 329 (QHYGLSVCVT…KKKGGNCVVR (233 aa)) folds into the Radical SAM core domain. Cys-104 and Cys-340 are joined by a disulfide. Positions 111, 115, and 118 each coordinate [4Fe-4S] cluster. S-adenosyl-L-methionine is bound by residues 163 to 164 (GE), Ser-195, 218 to 220 (SLH), and Asn-296. Cys-340 functions as the S-methylcysteine intermediate in the catalytic mechanism.

It belongs to the radical SAM superfamily. RlmN family. The cofactor is [4Fe-4S] cluster.

The protein localises to the cytoplasm. The catalysed reaction is adenosine(2503) in 23S rRNA + 2 reduced [2Fe-2S]-[ferredoxin] + 2 S-adenosyl-L-methionine = 2-methyladenosine(2503) in 23S rRNA + 5'-deoxyadenosine + L-methionine + 2 oxidized [2Fe-2S]-[ferredoxin] + S-adenosyl-L-homocysteine. It carries out the reaction adenosine(37) in tRNA + 2 reduced [2Fe-2S]-[ferredoxin] + 2 S-adenosyl-L-methionine = 2-methyladenosine(37) in tRNA + 5'-deoxyadenosine + L-methionine + 2 oxidized [2Fe-2S]-[ferredoxin] + S-adenosyl-L-homocysteine. Functionally, specifically methylates position 2 of adenine 2503 in 23S rRNA and position 2 of adenine 37 in tRNAs. This is Probable dual-specificity RNA methyltransferase RlmN from Streptococcus pneumoniae serotype 2 (strain D39 / NCTC 7466).